A 190-amino-acid chain; its full sequence is Large ribosomal subunit protein uL5 (190 aa).

It belongs to the universal ribosomal protein uL5 family. As to quaternary structure, part of the 50S ribosomal subunit; part of the 5S rRNA/L5/L18/L25 subcomplex. Contacts the 5S rRNA and the P site tRNA. Forms a bridge to the 30S subunit in the 70S ribosome.

Its function is as follows. This is one of the proteins that bind and probably mediate the attachment of the 5S RNA into the large ribosomal subunit, where it forms part of the central protuberance. In the 70S ribosome it contacts protein S13 of the 30S subunit (bridge B1b), connecting the 2 subunits; this bridge is implicated in subunit movement. Contacts the P site tRNA; the 5S rRNA and some of its associated proteins might help stabilize positioning of ribosome-bound tRNAs. This chain is Large ribosomal subunit protein uL5, found in Bifidobacterium adolescentis (strain ATCC 15703 / DSM 20083 / NCTC 11814 / E194a).